Consider the following 236-residue polypeptide: uncharacterized protein (236 aa).

Positions Met-1–Ala-26 are cleaved as a signal peptide.

It belongs to the periplasmic pilus chaperone family.

It localises to the periplasm. Its function is as follows. Part of the elfADCG-ycbUVF fimbrial operon, which promotes adhesion of bacteria to different abiotic surfaces. Could be required for the biogenesis of fimbriae. This is an uncharacterized protein from Escherichia coli (strain K12).